A 354-amino-acid polypeptide reads, in one-letter code: Alkanal monooxygenase alpha chain (354 aa).

This sequence belongs to the bacterial luciferase oxidoreductase family. Heterodimer of an alpha and a beta chain.

It catalyses the reaction a long-chain fatty aldehyde + FMNH2 + O2 = a long-chain fatty acid + hnu + FMN + H2O + 2 H(+). In terms of biological role, light-emitting reaction in luminous bacteria. This is Alkanal monooxygenase alpha chain (luxA) from Photobacterium leiognathi.